Consider the following 415-residue polypeptide: MSLQAPKGTKDLLPTESYKWQYLENKFRNIAADFGCREIRTPVFEYTELFQRGVGETTDVVQKEMYTFEDKAGRSITLKPEGTSPAVRAFVEGRLFNETQPTKMYYFTPVMRYENVQKGRLRQHHQFGIEIFGAKDASVDAEVISIPVGIYKELGVEGVELNINSIGCPKCRKTYNEALKKYLSKNYDKLCSTCKTRFDKNPLRILDCKVDTCKEIVKDAPIILDYICDECKDHFESLKSYLDVLDIKYKVDPFIVRGLDYYSKTVFEFIIDDITICAGGRYDYLIEEIGGPSMPAVGFGMGIERLLLTLQEKAIEIPEEAYVDLYLGNIGDKAKLEVLKLAKELRDRHIKCEIDHMGKSVKAQMKYANRIGAKYSMVLGEEELNTGKVSLKRMEDGKQIEVDIKEIDTLIKVFK.

It belongs to the class-II aminoacyl-tRNA synthetase family. Homodimer.

The protein localises to the cytoplasm. The catalysed reaction is tRNA(His) + L-histidine + ATP = L-histidyl-tRNA(His) + AMP + diphosphate + H(+). This Clostridium botulinum (strain Langeland / NCTC 10281 / Type F) protein is Histidine--tRNA ligase.